The primary structure comprises 60 residues: Putative insect toxin Acra6 (60 aa).

One can recognise an LCN-type CS-alpha/beta domain in the interval 2-60 (RDGYIRRKDEFKFKCYVDGKDCDDVCKSEGGSAGYCTALGFLCYCAGLPDDKAWKPTSS). 3 disulfide bridges follow: Cys-16-Cys-37, Cys-23-Cys-44, and Cys-27-Cys-46.

Belongs to the long (4 C-C) scorpion toxin superfamily. Sodium channel inhibitor family. Beta subfamily. In terms of tissue distribution, expressed by the venom gland.

The protein resides in the secreted. Depressant insect toxins cause a transient contraction paralysis followed by a slow flaccid paralysis. They bind voltage-independently to sodium channels (Nav) and block action potentials, primarily by depolarizing the axonal membrane and suppressing the sodium current. In Androctonus crassicauda (Arabian fat-tailed scorpion), this protein is Putative insect toxin Acra6.